The chain runs to 150 residues: Heavy metal-associated isoprenylated plant protein 24 (150 aa).

Residues 26-89 form the HMA domain; the sequence is QTVALRVARI…AAKSTKKKVE (64 aa). A metal cation contacts are provided by Cys-37 and Cys-40. Cys-147 is subject to Cysteine methyl ester. Residue Cys-147 is the site of S-farnesyl cysteine attachment. Residues 148-150 constitute a propeptide, removed in mature form; the sequence is AIM.

The protein belongs to the HIPP family. In terms of assembly, interacts with ZHD11/HB29.

Heavy-metal-binding protein. This is Heavy metal-associated isoprenylated plant protein 24 from Arabidopsis thaliana (Mouse-ear cress).